Here is a 199-residue protein sequence, read N- to C-terminus: Large ribosomal subunit protein bL25 (199 aa).

Belongs to the bacterial ribosomal protein bL25 family. CTC subfamily. As to quaternary structure, part of the 50S ribosomal subunit; part of the 5S rRNA/L5/L18/L25 subcomplex. Contacts the 5S rRNA. Binds to the 5S rRNA independently of L5 and L18.

This is one of the proteins that binds to the 5S RNA in the ribosome where it forms part of the central protuberance. In Syntrophobacter fumaroxidans (strain DSM 10017 / MPOB), this protein is Large ribosomal subunit protein bL25.